A 648-amino-acid chain; its full sequence is 1-deoxy-D-xylulose-5-phosphate synthase (648 aa).

Thiamine diphosphate contacts are provided by residues H79 and 120–122 (GHA). D152 contacts Mg(2+). Thiamine diphosphate-binding positions include 153-154 (GS), N181, F293, and E377. N181 is a Mg(2+) binding site.

This sequence belongs to the transketolase family. DXPS subfamily. In terms of assembly, homodimer. Requires Mg(2+) as cofactor. It depends on thiamine diphosphate as a cofactor.

It carries out the reaction D-glyceraldehyde 3-phosphate + pyruvate + H(+) = 1-deoxy-D-xylulose 5-phosphate + CO2. It functions in the pathway metabolic intermediate biosynthesis; 1-deoxy-D-xylulose 5-phosphate biosynthesis; 1-deoxy-D-xylulose 5-phosphate from D-glyceraldehyde 3-phosphate and pyruvate: step 1/1. Catalyzes the acyloin condensation reaction between C atoms 2 and 3 of pyruvate and glyceraldehyde 3-phosphate to yield 1-deoxy-D-xylulose-5-phosphate (DXP). This chain is 1-deoxy-D-xylulose-5-phosphate synthase, found in Bacteroides fragilis (strain ATCC 25285 / DSM 2151 / CCUG 4856 / JCM 11019 / LMG 10263 / NCTC 9343 / Onslow / VPI 2553 / EN-2).